A 450-amino-acid chain; its full sequence is Zinc finger protein 446 (450 aa).

In terms of domain architecture, SCAN box spans 26 to 108 (RLRFRGFCYQ…ALVEGLQHDP (83 aa)). Residue K130 forms a Glycyl lysine isopeptide (Lys-Gly) (interchain with G-Cter in SUMO2) linkage. 2 disordered regions span residues 130–155 (KTEEPLGSPHPSGTVESPGEGPQDTR) and 168–205 (EEPNVDGQEVAPSSPPLAAQSPEGNHGHQEPASTSFHP). S137 bears the Phosphoserine mark. A KRAB domain is found at 208–254 (IQEEWGLLDRSQKELYWDAMLEKYGTVVSLGLPPHQPEAQAQSELGM). S218 carries the post-translational modification Phosphoserine. Disordered stretches follow at residues 263–331 (RSLR…PRKP) and 354–389 (HTSGPGVQSPGLATGESTEKPPQGEVAFPHHPRRSL). A compositionally biased stretch (pro residues) spans 275-286 (PGCPEAQPPQGP). Over residues 287 to 306 (GPAAWEGLSGAATPAPTVRP) the composition is skewed to low complexity. Phosphothreonine is present on T308. A Glycyl lysine isopeptide (Lys-Gly) (interchain with G-Cter in SUMO2) cross-link involves residue K330. 3 C2H2-type zinc fingers span residues 332–359 (YTCEQCGRGFDWKSVFVIHHRTHTSGPG), 395–422 (YPCEECGCSFSWKSQLVIHRKSHTGQRR), and 423–450 (HFCSDCGRAFDWKSQLVIHRKGHRPEVP).

It belongs to the krueppel C2H2-type zinc-finger protein family.

The protein resides in the nucleus. Functionally, may be involved in transcriptional regulation. This Homo sapiens (Human) protein is Zinc finger protein 446 (ZNF446).